Consider the following 3413-residue polypeptide: MGSQTLEILRQGVWASLTGGYFYDPHQGVFCNVVHLYLWLYLLCSPFVAYLYFPSTWLTWCLYCVITSLTILMVKLANLALHRLYDRAQTMSEGNLKGQFVKVTKETEPRHDDEGGIEMKVIRPGGSRISGEQAINEASEENSIMSIDNVNSIIDLKVDVHRKNSSESIELMFYAPSMLSGGSQQDQQSLAGSASVSKSIRSTGPGGNSSTSAAAQADMFNKYLTVYPEVVEAAGSSAGSADGGSSGGDSRSGAAVSTLGHTGAGTAPAQHVRTGHLSRKCSEVFSRRHRRRLERQSSLDTAAAAANSNAENKLMRNQSDTIATAAPSFLHSQPTNKARGQTNPRQHFITSAPSTGIGGGDAPTSSTAVVVIAPASNSLVNPGRSSRLQRHRSSETHDERLKHQSRGGLFQPILQLPHHSAASSIGALAVLGGGGNVAANDVEDMELGLVRNAGSGGVADACSRALQSWILDPFPDGYLEDDSYTKSDLGIEQPHQPTFRTQHRHHHHHHHLHHHLGGAIIRKDPTSTMSALQLAAVTQPGTGGSVTGGGGAAGGGGSAAGMKRRRHSNATSYKHGSSQSNKSSLVGGGGSRGPSGEAGTSGGAGGTGGVRRIKSAALEVLCPQPSVSNLSPHPNSVEAISGQQQMRNPLPPPSKSLVRNQHLNLYPTQGYGDGTPSAGGGGPGNSSTCSSLFFGSSSACGSTTALIEPPVYPIVEHSDEKTAHEEHGDDCLGIGQGNADDDDEVDDVPIRRRTRALGCSQTHYSVESDVGGFLADEVGADEDVFKDFDDNLEHILSELQQTHNQLDDVLKTHDLHHHSHLHHHKAASVEGAGPSGGSVAVGVSAGNDDEDEETEDNNTGSRSPLLNDRNRQPATLREIQADKQLRQELSHQSGAVIPAPNPPVPIRSEADSGCPSSDCEQVSASSKDQLLSGIELELQQYQILQRCQLDEEQPCTSKMAAKSLGAIPKVVKYREVDELRRRRRGGSPADAAEAGNEFALVKQTKQASRNSSSSNSTHSISLTDSLTADIHKMLWLMHGGAVDDRGRPITGTSADGTPIPASSSLVPPNMSNAHFQFYQDAIQALQGTHPTSGSSVEHMTNIELARDKLRLDAKLMCEQLVAAAEANSGVRGNTLATQQMTQQQVGMLMRGGSSSRHPSSAPFSVQGLINVIRSERPAARSQLDALQQLSDAAAALAANASEAASVSASGAGGGASSGGGGVLSALGLANHPSNQISQISQLSQMSQPMLNVDGHFAPYCDYWRPACLLSATEKPAAPKSFYKYRFKWCGQEHEFKIAMDRLELLALFDRDLHWMHVLLASLLCTLVACLGAAILQHDHYKDLCALLFCAVIAGAQYSLVKSVQPDAASPVHGFNKTVAYSRAIYFCLAGGMLLLLKRLDTDYGERTPDPVVFFGMRYSPADVVALLLQALYILLLCFPIIFSVGLCPQINTFLMYLLEQIDMHVFGGNAASSLLGSFLCVVRSVLAVMLLYGPLYGALDEQRGTQYILFSIFCAMLVPLGYHLSRCASDFSHLWRLIKTCIVSTYRDDEDEDLSQMQHIATGTVTGSGTANSTALQLTTSTPKQHRQTDVKTEHEQIELSSLEKLTVNEEHHEKDHGADDQLETDQDLPLQQKHSKSKTSSLGSSQQTLGKTISSSKRAITASSSCTSIGTGEPAVEAGALTEEAVEGEEQRRNTLAGEVGSKHELAENYDQAAKIDECEDKISSSSATNPGDMSTLTAGAGTATTDATPACLEADPDAEAEAPADEKQHQGILGTGTGTGTGTTEASENGSGGGANGNTNSNGTGNDLPDPLPRKLQATVTTRLKNDLVVMTLLAVSVLGLHCSTVFTALQPDLNVVLYSFIGVLGLLLHYIVPQMRKHMPWLCFSRPLLRQREFGQFEVLNAPKIMWFEKLYIYLSVLERNVLFPLLAISSLTADSQLIVAKFGLPWGTLIVAICALKFVRNAYSDPTNQYLIIIFTVLLFRIDFAMATETFIIDYFFVSLAFRKCCDFLLKLQFIVTYIAPWQITWGSAFHAFAQPFSVPHSAMLFLQAAISAVLSTPLNPFLGSAIFLTSYVRPIKFWERDYNTRRIDHSNTRLSSQLERDLGADDNNLNSIFYEHLTRSLQHSLCGDLLMGRWGNVNQGDCFVLASDDLNCLVHIIELGNGLCTFQMRGLEFRGTYCQQREVEAITEDVEDNDGCCCCDPGHLPQLLSANAMFSTRWLAWQVVAAQYVIEGYSISDNLASATLQVFEYRKVLITYYIKSIIYYVVKNPKLEQWLASGPIQDALQHTLSRQFVDLDPIFNFNLDEDFDFRAVGITRSSFCYVYLKWINYCVDMRRDANSMGGAPPAQAPAAAGGASSAPATAGVAPPAPVTPAHNDSKSTPNLSAHGGQAGPSSGQSKSQSQQQLRRPQKSVAQETSVGGGGVVVGGTTVPGTGGVTGGGGDPQLSSSHSFANISRQTSESAPGLGGYVAYMDQNVFVKLAKSSTTTGAGAGAPTSRKESQEKPALRLKLASVGKDAPLVSLCLALGLLARRSLATASHSALTGVEFFLHGLHALFKGDFRITSPRDEWVFADMELLHSVVAPAVKMALKLQQDHITNPDEFLDPHALYDAIDNCSNELVISHEADPVWRSAVLRGAPNLLALRHVMEDGSDEYRIIRLTKRCLSFRVIKLNRECVRGLWAGQQQELIYLRNRNPERGSIQNAKQALRNIINSSCDQPIGYPIYVSPLTTSYADTNAQLCEVIGGAITLDTIRHTVLGWWHRIRERCRQGCSSGSALEPHPGSGPVQLGACNFGSGGSVVGAASTATGVGASTGSGLGVAAPGTAGSTGGESGDLAPVFISAPLYNTLTVNSYYSVRPGNVPGGPIPGNLGGNYVSDSLAVVRGGLAVMPVKPTSTTLIAGLLNRERDETSGSGIMGAGASGPTRATSSGGVRSRRPEVGSSRGRDHERRATLPIASGGAGGEPGKDLTAPQTQVEHEPSPRSTKLSSSSGSLGLGMGVGLGNIITTPGDYPRKTKGPICLTAVDTGTSSSAAEGKPAGSGTVAGTGVGGVIRKPRIEIFKKVIIVDDTGIYDCLDIIDAVVWPTERMRNNGGRLSWKDWEPSAGMVGHVVHCWTPNHKDIRFRSHVNRYVYLVEIGDHYVPVEELGLREYNQIMGSTEEMANSRRSSIQRDFHEYNIQLKLAGLAPIIGGGESSTATTSDASKSHKAKIRAVSSSSSEDEDTSSTRSIPLPQGDDGDLTNFTRLVSMWKEIILDNNKRRLYDMGELSPELLQKLDDAVQQQQQLEDALAEESKEKGTATVTANEGEEGVGEMEIEPEQEQKEVVYLEEQSPLEEVTVSKPDEQPAQPTIPASPVPAETSSTSSAKSTSSPSLCQEEEDAVDPEETPELASEESPSDENGESEAGTTV.

2 helical membrane-spanning segments follow: residues 33 to 53 (VVHL…YLYF) and 57 to 77 (WLTW…VKLA). Asn164 is a glycosylation site (N-linked (GlcNAc...) asparagine). The segment covering 182–195 (GSQQDQQSLAGSAS) has biased composition (low complexity). Disordered regions lie at residues 182 to 213 (GSQQ…STSA) and 235 to 314 (GSSA…ENKL). Polar residues predominate over residues 196 to 213 (VSKSIRSTGPGGNSSTSA). An N-linked (GlcNAc...) asparagine glycan is attached at Asn208. Over residues 302 to 312 (AAAAANSNAEN) the composition is skewed to low complexity. Asn317 carries an N-linked (GlcNAc...) asparagine glycan. Disordered stretches follow at residues 327–363 (PSFL…GDAP), 379–403 (LVNP…RLKH), 540–609 (PGTG…GTGG), and 625–651 (PSVS…NPLP). The span at 330–354 (LHSQPTNKARGQTNPRQHFITSAPS) shows a compositional bias: polar residues. The segment covering 392-402 (RSSETHDERLK) has biased composition (basic and acidic residues). The segment covering 541-559 (GTGGSVTGGGGAAGGGGSA) has biased composition (gly residues). Residues Asn569 and Asn581 are each glycosylated (N-linked (GlcNAc...) asparagine). Residues 569-582 (NATSYKHGSSQSNK) are compositionally biased toward polar residues. A compositionally biased stretch (gly residues) spans 599–609 (GTSGGAGGTGG). Residues 625 to 634 (PSVSNLSPHP) show a composition bias toward polar residues. The N-linked (GlcNAc...) asparagine glycan is linked to Asn685. A compositionally biased stretch (basic and acidic residues) spans 720–730 (EKTAHEEHGDD). 4 disordered regions span residues 720–745 (EKTA…DDEV), 816–873 (HHHS…NRQP), 886–921 (RQEL…DCEQ), and 1002–1021 (KQTK…HSIS). Over residues 816 to 826 (HHHSHLHHHKA) the composition is skewed to basic residues. Over residues 828–846 (SVEGAGPSGGSVAVGVSAG) the composition is skewed to low complexity. Positions 847 to 856 (NDDEDEETED) are enriched in acidic residues. An N-linked (GlcNAc...) asparagine glycan is attached at Asn857. A compositionally biased stretch (low complexity) spans 1008 to 1021 (SRNSSSSNSTHSIS). 4 N-linked (GlcNAc...) asparagine glycosylation sites follow: Asn1010, Asn1015, Asn1069, and Asn1199. The next 2 helical transmembrane spans lie at 1315-1335 (MHVL…AAIL) and 1343-1363 (LCAL…VKSV). Asn1375 carries an N-linked (GlcNAc...) asparagine glycan. Helical transmembrane passes span 1376–1396 (KTVA…LLLL), 1423–1443 (VVAL…IIFS), 1474–1494 (LLGS…LYGP), and 1504–1524 (GTQY…GYHL). A glycan (N-linked (GlcNAc...) asparagine) is linked at Asn1572. Disordered stretches follow at residues 1577 to 1675 (QLTT…TGEP), 1722 to 1744 (DKIS…GAGT), and 1760 to 1813 (AEAE…LPDP). 2 stretches are compositionally biased toward basic and acidic residues: residues 1587–1598 (RQTDVKTEHEQI) and 1607–1620 (TVNE…HGAD). Residues 1639–1666 (KTSSLGSSQQTLGKTISSSKRAITASSS) are compositionally biased toward low complexity. A compositionally biased stretch (polar residues) spans 1725–1738 (SSSSATNPGDMSTL). Tandem repeats lie at residues 1776 to 1777 (GT), 1778 to 1779 (GT), 1780 to 1781 (GT), 1782 to 1783 (GT), and 1784 to 1785 (GT). The tract at residues 1776–1785 (GTGTGTGTGT) is 5 X 2 AA tandem repeats of G-T. N-linked (GlcNAc...) asparagine glycans are attached at residues Asn1791 and Asn1804. A compositionally biased stretch (low complexity) spans 1799–1808 (GNTNSNGTGN). The next 5 helical transmembrane spans lie at 1830–1850 (LVVM…TVFT), 1856–1876 (LNVV…YIVP), 1914–1934 (LYIY…AISS), 1940–1960 (QLIV…ICAL), and 1976–1996 (IIIF…ETFI). The segment at 2344-2463 (SMGGAPPAQA…HSFANISRQT (120 aa)) is disordered. The segment covering 2346–2370 (GGAPPAQAPAAAGGASSAPATAGVA) has biased composition (low complexity). Asn2380 and Asn2387 each carry an N-linked (GlcNAc...) asparagine glycan. The span at 2389–2411 (SAHGGQAGPSSGQSKSQSQQQLR) shows a compositional bias: low complexity. Gly residues predominate over residues 2437 to 2447 (GTGGVTGGGGD). Residues 2449–2463 (QLSSSHSFANISRQT) show a composition bias toward polar residues. N-linked (GlcNAc...) asparagine glycans are attached at residues Asn2458, Asn2619, and Asn2717. Disordered stretches follow at residues 2908–2997 (LNRE…SSGS) and 3198–3242 (ESST…GDDG). The span at 2940–2956 (RRPEVGSSRGRDHERRA) shows a compositional bias: basic and acidic residues. An N-linked (GlcNAc...) asparagine glycan is attached at Asn3246. Residues 3295 to 3413 (AEESKEKGTA…NGESEAGTTV (119 aa)) are disordered. Residues 3310–3323 (EGEEGVGEMEIEPE) show a composition bias toward acidic residues. Low complexity predominate over residues 3364-3377 (TSSTSSAKSTSSPS). A compositionally biased stretch (acidic residues) spans 3380-3406 (QEEEDAVDPEETPELASEESPSDENGE).

This sequence belongs to the pecanex family.

It is found in the membrane. Functionally, involved in neurogenesis. This is Protein pecanex (pcx) from Drosophila melanogaster (Fruit fly).